The chain runs to 22 residues: Fuctinin-1 (22 aa).

Residues 1-22 are disordered; that stretch reads SASPGLPKGEKEQQEAIEHIDE. Basic and acidic residues predominate over residues 8-22; sequence KGEKEQQEAIEHIDE.

This sequence to human SET/PHAPII protein. Oligomer.

The protein localises to the cytoplasm. Its function is as follows. Has a role in the physiological regulation of fucosylation processes. This chain is Fuctinin-1, found in Rattus norvegicus (Rat).